We begin with the raw amino-acid sequence, 518 residues long: Protein translocase subunit SecD (518 aa).

Helical transmembrane passes span 9 to 29, 361 to 381, 384 to 404, 406 to 426, 452 to 474, and 486 to 506; these read IFLS…NFMQ, LIGF…LGLF, IALS…QATL, LPGI…NVLI, FATI…IFGV, and IGII…IDIW.

It belongs to the SecD/SecF family. SecD subfamily. As to quaternary structure, forms a complex with SecF. Part of the essential Sec protein translocation apparatus which comprises SecA, SecYEG and auxiliary proteins SecDF-YajC and YidC.

Its subcellular location is the cell inner membrane. Functionally, part of the Sec protein translocase complex. Interacts with the SecYEG preprotein conducting channel. SecDF uses the proton motive force (PMF) to complete protein translocation after the ATP-dependent function of SecA. In Rickettsia conorii (strain ATCC VR-613 / Malish 7), this protein is Protein translocase subunit SecD.